Reading from the N-terminus, the 714-residue chain is Protein HAPLESS 2-B (714 aa).

Residues 1-33 (MAPRRRRRAARSSRPLLLALLAAAVNNFAPAGG) form the signal peptide. Residues 34–552 (VEVLAKSRLE…FFTGTTCSTR (519 aa)) are Extracellular-facing. Disulfide bonds link Cys-45–Cys-59, Cys-134–Cys-164, Cys-146–Cys-194, Cys-165–Cys-321, Cys-167–Cys-177, Cys-304–Cys-328, and Cys-441–Cys-479. Residues 553 to 573 (CWSFLKFVIHGLLLVAVLWLL) traverse the membrane as a helical segment. Topologically, residues 574 to 714 (HRKGLFDPLY…HGDRRHHAWH (141 aa)) are cytoplasmic. The disordered stretch occupies residues 597 to 619 (RARRRHKRAHSHRHSHHHDAHKR). Positions 598–619 (ARRRHKRAHSHRHSHHHDAHKR) are enriched in basic residues.

It belongs to the HAP2/GCS1 family.

It localises to the endoplasmic reticulum membrane. Its subcellular location is the cell membrane. Required for male fertility. Plays a role in pollen tube guidance and successful gamete attachment. Essential for the fusion of gametes during double fertilization, where one male gamete fuses with the egg to produce a zygote, and another male gamete fuses with the central cell to produce the endosperm. Mediates the fusion of cell membranes. Not required for pollen tube outgrowth. The protein is Protein HAPLESS 2-B (HAP2B) of Oryza sativa subsp. japonica (Rice).